Consider the following 345-residue polypeptide: Tropomodulin-4 (345 aa).

Residues N42–L63 form a disordered region.

This sequence belongs to the tropomodulin family. Binds to the N-terminus of tropomyosin and to actin.

The protein localises to the cytoplasm. It localises to the cytoskeleton. In terms of biological role, blocks the elongation and depolymerization of the actin filaments at the pointed end. The Tmod/TM complex contributes to the formation of the short actin protofilament, which in turn defines the geometry of the membrane skeleton. This chain is Tropomodulin-4 (TMOD4), found in Bos taurus (Bovine).